We begin with the raw amino-acid sequence, 427 residues long: Glutamate-1-semialdehyde 2,1-aminomutase (427 aa).

K263 carries the N6-(pyridoxal phosphate)lysine modification.

This sequence belongs to the class-III pyridoxal-phosphate-dependent aminotransferase family. HemL subfamily. Homodimer. Pyridoxal 5'-phosphate is required as a cofactor.

The protein localises to the cytoplasm. It carries out the reaction (S)-4-amino-5-oxopentanoate = 5-aminolevulinate. It participates in porphyrin-containing compound metabolism; protoporphyrin-IX biosynthesis; 5-aminolevulinate from L-glutamyl-tRNA(Glu): step 2/2. The sequence is that of Glutamate-1-semialdehyde 2,1-aminomutase from Caldicellulosiruptor saccharolyticus (strain ATCC 43494 / DSM 8903 / Tp8T 6331).